A 299-amino-acid polypeptide reads, in one-letter code: Probable alpha-L-glutamate ligase 2 (299 aa).

Positions 104-287 (MQLMSRRGIG…VAGAIIEFVE (184 aa)) constitute an ATP-grasp domain. ATP is bound by residues Lys141, 178 to 179 (EY), Asp187, and 211 to 213 (RSN). Mg(2+) is bound by residues Asp248, Glu260, and Asn262. Mn(2+) contacts are provided by Asp248, Glu260, and Asn262.

It belongs to the RimK family. Mg(2+) serves as cofactor. The cofactor is Mn(2+).

This chain is Probable alpha-L-glutamate ligase 2, found in Shewanella sp. (strain MR-4).